A 257-amino-acid polypeptide reads, in one-letter code: MEIQSQPTNLTKEDVIKLIAEFQQNQCGEAQERLVDHYKNLVYSIAYRYSKGGPMHEDIIQVGMLGLLGAIRRYDYSIGNAFEPFAIPTIVGEIKKYLRDKTWGIHVPRRIKDLGGKIKLAIEELTDHLQRSPKIIEIADHLGLSEEEVLEIMDAKNNYRVSSLDDVVENASDGSSVARIESVGEVEQGYEQTERRLVLKDIFNVLNETEKSVIHYIFEENLNQKDTGERLGISQMHVSRIKRQAISKLKQAAFLDT.

Positions 58-71 (DIIQVGMLGLLGAI) match the Polymerase core binding motif. Positions 224–243 (QKDTGERLGISQMHVSRIKR) form a DNA-binding region, H-T-H motif.

Belongs to the sigma-70 factor family. SigB subfamily.

Functionally, sigma factors are initiation factors that promote the attachment of RNA polymerase to specific initiation sites and are then released. This chain is RNA polymerase sigma-B factor (sigB), found in Bacillus anthracis.